Consider the following 906-residue polypeptide: Protein translocase subunit SecA (906 aa).

Residues Gln89, 107–111 (GEGKT), and Asp501 each bind ATP. 4 residues coordinate Zn(2+): Cys891, Cys893, Cys902, and His903.

This sequence belongs to the SecA family. In terms of assembly, monomer and homodimer. Part of the essential Sec protein translocation apparatus which comprises SecA, SecYEG and auxiliary proteins SecDF-YajC and YidC. Zn(2+) serves as cofactor.

The protein resides in the cell inner membrane. It localises to the cytoplasm. The enzyme catalyses ATP + H2O + cellular proteinSide 1 = ADP + phosphate + cellular proteinSide 2.. Its function is as follows. Part of the Sec protein translocase complex. Interacts with the SecYEG preprotein conducting channel. Has a central role in coupling the hydrolysis of ATP to the transfer of proteins into and across the cell membrane, serving both as a receptor for the preprotein-SecB complex and as an ATP-driven molecular motor driving the stepwise translocation of polypeptide chains across the membrane. The chain is Protein translocase subunit SecA from Parvibaculum lavamentivorans (strain DS-1 / DSM 13023 / NCIMB 13966).